A 155-amino-acid polypeptide reads, in one-letter code: Probable calcium-binding protein CML9 (155 aa).

3 consecutive EF-hand domains span residues Glu-8–Asn-43, Ala-86–Arg-121, and Leu-122–Lys-155. Ca(2+) contacts are provided by Asp-21, Asp-23, Asp-25, Arg-27, and Glu-32.

Its function is as follows. Potential calcium sensor. This is Probable calcium-binding protein CML9 (CML9) from Oryza sativa subsp. japonica (Rice).